The primary structure comprises 89 residues: Small ribosomal subunit protein uS15 (89 aa).

It belongs to the universal ribosomal protein uS15 family. In terms of assembly, part of the 30S ribosomal subunit. Forms a bridge to the 50S subunit in the 70S ribosome, contacting the 23S rRNA.

One of the primary rRNA binding proteins, it binds directly to 16S rRNA where it helps nucleate assembly of the platform of the 30S subunit by binding and bridging several RNA helices of the 16S rRNA. Its function is as follows. Forms an intersubunit bridge (bridge B4) with the 23S rRNA of the 50S subunit in the ribosome. The polypeptide is Small ribosomal subunit protein uS15 (Exiguobacterium sp. (strain ATCC BAA-1283 / AT1b)).